The following is an 878-amino-acid chain: Alanine--tRNA ligase (878 aa).

Residues H568, H572, C669, and H673 each coordinate Zn(2+).

The protein belongs to the class-II aminoacyl-tRNA synthetase family. The cofactor is Zn(2+).

It is found in the cytoplasm. It carries out the reaction tRNA(Ala) + L-alanine + ATP = L-alanyl-tRNA(Ala) + AMP + diphosphate. In terms of biological role, catalyzes the attachment of alanine to tRNA(Ala) in a two-step reaction: alanine is first activated by ATP to form Ala-AMP and then transferred to the acceptor end of tRNA(Ala). Also edits incorrectly charged Ser-tRNA(Ala) and Gly-tRNA(Ala) via its editing domain. The polypeptide is Alanine--tRNA ligase (Polaromonas sp. (strain JS666 / ATCC BAA-500)).